We begin with the raw amino-acid sequence, 179 residues long: ATP synthase subunit delta (179 aa).

The protein belongs to the ATPase delta chain family. F-type ATPases have 2 components, F(1) - the catalytic core - and F(0) - the membrane proton channel. F(1) has five subunits: alpha(3), beta(3), gamma(1), delta(1), epsilon(1). F(0) has three main subunits: a(1), b(2) and c(10-14). The alpha and beta chains form an alternating ring which encloses part of the gamma chain. F(1) is attached to F(0) by a central stalk formed by the gamma and epsilon chains, while a peripheral stalk is formed by the delta and b chains.

The protein resides in the cell membrane. In terms of biological role, f(1)F(0) ATP synthase produces ATP from ADP in the presence of a proton or sodium gradient. F-type ATPases consist of two structural domains, F(1) containing the extramembraneous catalytic core and F(0) containing the membrane proton channel, linked together by a central stalk and a peripheral stalk. During catalysis, ATP synthesis in the catalytic domain of F(1) is coupled via a rotary mechanism of the central stalk subunits to proton translocation. Its function is as follows. This protein is part of the stalk that links CF(0) to CF(1). It either transmits conformational changes from CF(0) to CF(1) or is implicated in proton conduction. The polypeptide is ATP synthase subunit delta (Ureaplasma urealyticum serovar 10 (strain ATCC 33699 / Western)).